A 137-amino-acid polypeptide reads, in one-letter code: Large ribosomal subunit protein uL16 (137 aa).

Belongs to the universal ribosomal protein uL16 family. In terms of assembly, part of the 50S ribosomal subunit.

Binds 23S rRNA and is also seen to make contacts with the A and possibly P site tRNAs. The sequence is that of Large ribosomal subunit protein uL16 from Rhizobium johnstonii (strain DSM 114642 / LMG 32736 / 3841) (Rhizobium leguminosarum bv. viciae).